A 215-amino-acid polypeptide reads, in one-letter code: Ribosomal RNA small subunit methyltransferase G (215 aa).

Residues glycine 82, methionine 87, 133 to 134, and arginine 148 contribute to the S-adenosyl-L-methionine site; that span reads VE.

This sequence belongs to the methyltransferase superfamily. RNA methyltransferase RsmG family.

The protein resides in the cytoplasm. It carries out the reaction guanosine(527) in 16S rRNA + S-adenosyl-L-methionine = N(7)-methylguanosine(527) in 16S rRNA + S-adenosyl-L-homocysteine. Its function is as follows. Specifically methylates the N7 position of guanine in position 527 of 16S rRNA. This chain is Ribosomal RNA small subunit methyltransferase G, found in Stutzerimonas stutzeri (strain A1501) (Pseudomonas stutzeri).